We begin with the raw amino-acid sequence, 1856 residues long: Protein TANC1 (1856 aa).

The residue at position 1 (methionine 1) is an N-acetylmethionine. 5 disordered regions span residues 1–45, 58–130, 203–222, 262–296, and 437–489; these read MLKA…LSTT, SMSL…SCSP, KSPC…KDSG, RADN…PVPY, and IASS…RPRE. The segment covering 8–21 has biased composition (basic and acidic residues); that stretch reads KSREGGKGSKKEAG. A compositionally biased stretch (polar residues) spans 29 to 45; it reads PALSSSGDSPVNSLSTT. Phosphoserine is present on residues serine 60, serine 63, serine 64, serine 204, serine 267, and serine 462. The segment covering 60-77 has biased composition (low complexity); it reads SLPSSPLLPRQSLLTQSR. A compositionally biased stretch (polar residues) spans 203–216; sequence KSPCETISSPSSTL. Over residues 439–475 the composition is skewed to low complexity; it reads SSSPSLSPKSSDPTQDLPGTPLLSPSSSTSALSVTRT. 11 ANK repeats span residues 893-925, 931-960, 964-993, 997-1026, 1037-1066, 1075-1104, 1108-1137, 1141-1170, 1174-1203, 1207-1236, and 1240-1269; these read EGLS…NVNY, NNAP…CLDG, NGMN…RVDH, KGQC…SAGP, ALQQ…EHEI, WGET…AVSR, RGVP…DVNL, QGRT…ALSS, EGLS…EIDQ, NGRT…VIEH, and SGMR…KLGN. TPR repeat units lie at residues 1286-1319, 1333-1366, and 1368-1400; these read LQKL…FPRE, VSLY…KPKS, and EAFY…CPNN. Over residues 1417 to 1426 the composition is skewed to low complexity; it reads LQRNQQQKQQ. 3 disordered regions span residues 1417-1597, 1636-1720, and 1832-1856; these read LQRN…FGDR, DMAP…NTPF, and HVST…ESNV. Serine 1436 and serine 1463 each carry phosphoserine. Acidic residues predominate over residues 1454-1463; it reads EEAEEEDTSS. 2 stretches are compositionally biased toward polar residues: residues 1490–1505 and 1524–1556; these read EGLQ…QSRA and PTKQ…VSSQ. Positions 1656–1686 are enriched in low complexity; that stretch reads SLSSSGSSGSPSSSIKMSSSTSSLTSSSSVS. Phosphoserine occurs at positions 1665, 1673, and 1674.

It belongs to the TANC family. Interacts probably directly with DLG1, DLG4, HOMER1. Interacts with DLGAP1, INA, CAMK2A, GRIN2B and GRIA1. Interacts with TNIK and MINK1. Phosphorylated; by MINK1 and TNIK upon stimulation by RAP2A.

The protein localises to the postsynaptic density. Functionally, may be a scaffold component in the postsynaptic density. The protein is Protein TANC1 (Tanc1) of Mus musculus (Mouse).